Here is a 75-residue protein sequence, read N- to C-terminus: Large ribosomal subunit protein bL31 (75 aa).

In terms of assembly, part of the 50S ribosomal subunit.

In terms of biological role, binds the 23S rRNA. The chain is Large ribosomal subunit protein bL31 from Rhodopseudomonas palustris (strain ATCC BAA-98 / CGA009).